Consider the following 205-residue polypeptide: ATP synthase subunit b 1 (205 aa).

A compositionally biased stretch (polar residues) spans 1–15 (MFVSTAFAQTATESQ). Positions 1-26 (MFVSTAFAQTATESQPAPAAGEHGAA) are disordered. A compositionally biased stretch (low complexity) spans 16–26 (PAPAAGEHGAA). The chain crosses the membrane as a helical span at residues 56-78 (SQILWLAITFGLFYLFMSRVVLP).

It belongs to the ATPase B chain family. As to quaternary structure, F-type ATPases have 2 components, F(1) - the catalytic core - and F(0) - the membrane proton channel. F(1) has five subunits: alpha(3), beta(3), gamma(1), delta(1), epsilon(1). F(0) has three main subunits: a(1), b(2) and c(10-14). The alpha and beta chains form an alternating ring which encloses part of the gamma chain. F(1) is attached to F(0) by a central stalk formed by the gamma and epsilon chains, while a peripheral stalk is formed by the delta and b chains.

It is found in the cell inner membrane. Its function is as follows. F(1)F(0) ATP synthase produces ATP from ADP in the presence of a proton or sodium gradient. F-type ATPases consist of two structural domains, F(1) containing the extramembraneous catalytic core and F(0) containing the membrane proton channel, linked together by a central stalk and a peripheral stalk. During catalysis, ATP synthesis in the catalytic domain of F(1) is coupled via a rotary mechanism of the central stalk subunits to proton translocation. In terms of biological role, component of the F(0) channel, it forms part of the peripheral stalk, linking F(1) to F(0). The chain is ATP synthase subunit b 1 from Brucella anthropi (strain ATCC 49188 / DSM 6882 / CCUG 24695 / JCM 21032 / LMG 3331 / NBRC 15819 / NCTC 12168 / Alc 37) (Ochrobactrum anthropi).